The chain runs to 634 residues: 1-deoxy-D-xylulose-5-phosphate synthase (634 aa).

Residues His-73 and 114–116 contribute to the thiamine diphosphate site; that span reads GHS. Asp-145 contacts Mg(2+). Thiamine diphosphate-binding positions include 146-147, Asn-174, Tyr-285, and Glu-365; that span reads GA. Asn-174 serves as a coordination point for Mg(2+).

The protein belongs to the transketolase family. DXPS subfamily. In terms of assembly, homodimer. It depends on Mg(2+) as a cofactor. Thiamine diphosphate serves as cofactor.

It carries out the reaction D-glyceraldehyde 3-phosphate + pyruvate + H(+) = 1-deoxy-D-xylulose 5-phosphate + CO2. The protein operates within metabolic intermediate biosynthesis; 1-deoxy-D-xylulose 5-phosphate biosynthesis; 1-deoxy-D-xylulose 5-phosphate from D-glyceraldehyde 3-phosphate and pyruvate: step 1/1. In terms of biological role, catalyzes the acyloin condensation reaction between C atoms 2 and 3 of pyruvate and glyceraldehyde 3-phosphate to yield 1-deoxy-D-xylulose-5-phosphate (DXP). In Desulforudis audaxviator (strain MP104C), this protein is 1-deoxy-D-xylulose-5-phosphate synthase.